An 853-amino-acid chain; its full sequence is DNA mismatch repair protein MutS (853 aa).

614 to 621 (GPNMGGKS) contacts ATP.

Belongs to the DNA mismatch repair MutS family.

Functionally, this protein is involved in the repair of mismatches in DNA. It is possible that it carries out the mismatch recognition step. This protein has a weak ATPase activity. This chain is DNA mismatch repair protein MutS, found in Escherichia coli O6:K15:H31 (strain 536 / UPEC).